Reading from the N-terminus, the 262-residue chain is Acyl-[acyl-carrier-protein]--UDP-N-acetylglucosamine O-acyltransferase (262 aa).

Belongs to the transferase hexapeptide repeat family. LpxA subfamily. Homotrimer.

The protein localises to the cytoplasm. It carries out the reaction a (3R)-hydroxyacyl-[ACP] + UDP-N-acetyl-alpha-D-glucosamine = a UDP-3-O-[(3R)-3-hydroxyacyl]-N-acetyl-alpha-D-glucosamine + holo-[ACP]. It functions in the pathway glycolipid biosynthesis; lipid IV(A) biosynthesis; lipid IV(A) from (3R)-3-hydroxytetradecanoyl-[acyl-carrier-protein] and UDP-N-acetyl-alpha-D-glucosamine: step 1/6. Functionally, involved in the biosynthesis of lipid A, a phosphorylated glycolipid that anchors the lipopolysaccharide to the outer membrane of the cell. The polypeptide is Acyl-[acyl-carrier-protein]--UDP-N-acetylglucosamine O-acyltransferase (Burkholderia mallei (strain NCTC 10247)).